A 379-amino-acid polypeptide reads, in one-letter code: Transcription termination factor 1a, mitochondrial (379 aa).

The N-terminal 37 residues, 1–37 (MASRNIWCVRRNFLFDLRDWMLQYSAEVFLKSISFRP), are a transit peptide targeting the mitochondrion. Interaction with DNA regions lie at residues 151–152 (RS), 229–233 (QSTKR), 306–313 (SEKKFNDK), 337–340 (SINT), and 366–373 (SQRRYEAK).

Belongs to the mTERF family. Monomer. Phosphoprotein with mostly four phosphate groups. While the DNA-binding activity is unaffected by the phosphorylation state, only the phosphorylated form of the protein is active for termination activity. Functioning seems to be regulated by phosphorylation. Predominantly expressed in heart and liver, with extremely low levels in other tissues. Expressed strongly in the heart and at lower levels in brain, liver and kidney.

Its subcellular location is the mitochondrion. Its function is as follows. Transcription termination factor. Binds to a 28 bp region within the tRNA(Leu(uur)) gene at a position immediately adjacent to and downstream of the 16S rRNA gene; this region comprises a tridecamer sequence critical for directing accurate termination. Binds DNA along the major grove and promotes DNA bending and partial unwinding. Promotes base flipping. Transcription termination activity appears to be polarized with highest specificity for transcripts initiated on the light strand. This Mus musculus (Mouse) protein is Transcription termination factor 1a, mitochondrial (Mterf1a).